The following is a 365-amino-acid chain: Synapse-associated protein 1 (365 aa).

The tract at residues 1–65 (MFGGLSSWLG…QPPTEDPQFL (65 aa)) is disordered. A compositionally biased stretch (low complexity) spans 52–62 (EQQQQPPTEDP). The BSD domain maps to 172–224 (VQFNFDFDQMYPVALVMLQEDELLSKMRFALVPKLVKEEVFWRNYFYRISLIK). The tract at residues 237–259 (QASGKEEKSSNRDDNLPLTEAVR) is disordered. The span at 240-251 (GKEEKSSNRDDN) shows a compositional bias: basic and acidic residues. Position 262 is a phosphothreonine (Thr262). Phosphoserine is present on residues Ser283, Ser298, and Ser327. Positions 344–365 (VAESEKRDENWDKEIEKMLQES) are disordered. The segment covering 346 to 365 (ESEKRDENWDKEIEKMLQES) has biased composition (basic and acidic residues).

In terms of assembly, interacts (via phosphorylated form and BSD domain) with AKT1; this interaction is enhanced in a mTORC2-mediated manner in response to epidermal growth factor (EGF) stimulation and activates AKT1. In terms of processing, phosphorylated. Phosphorylation increases in a mTORC2-mediated manner in response to epidermal growth factor (EGF) stimulation. In terms of tissue distribution, expressed in the liver, kidney, skeletal muscle and in white and brown adipose tissues. Expressed in the cortex, cerebellum, thalamus, hippocampus, braistem, olfactory bulb, spinal cord and striatum of the brain. Expressed in most neuropil regions containing glutamatergic synaptic terminals. Expressed in the CA1, CA2 and CA3 perikarya of the hippocampus. Expressed in neurons and Purkinje cells (at the protein level).

The protein resides in the cytoplasm. The protein localises to the perinuclear region. It localises to the golgi apparatus. Its subcellular location is the perikaryon. It is found in the cell projection. The protein resides in the axon. The protein localises to the dendrite. It localises to the growth cone. Its subcellular location is the presynaptic cell membrane. It is found in the postsynaptic cell membrane. The protein resides in the membrane. Functionally, plays a role in adipocyte differentiation by promoting mTORC2-mediated phosphorylation of AKT1 at 'Ser-473' after growth factor stimulation. In Mus musculus (Mouse), this protein is Synapse-associated protein 1.